Consider the following 1091-residue polypeptide: Sodium/potassium exporting P-type ATPase 1 (1091 aa).

The Cytoplasmic portion of the chain corresponds to 1 to 63; it reads MGEGTTKENN…LGDDTKIDYK (63 aa). A helical transmembrane segment spans residues 64 to 84; that stretch reads AMVLHQVCNAMIMVLLISMII. Residues 85 to 90 lie on the Extracellular side of the membrane; sequence SFAMHD. A helical membrane pass occupies residues 91–111; the sequence is WITGGVISFVIAVNVLIGLVQ. Topologically, residues 112–282 are cytoplasmic; sequence EYKATKTMNS…TNVGTPLHRK (171 aa). The chain crosses the membrane as a helical span at residues 283 to 303; sequence LSKLAVLLFWIAVLFAIIVMA. The Extracellular segment spans residues 304–312; it reads SQKFDVDKR. A helical membrane pass occupies residues 313 to 333; sequence VAIYAICVALSMIPSSLVVVL. Residues 334 to 815 lie on the Cytoplasmic side of the membrane; it reads TITMSVGAAV…RRMTDNIQKF (482 aa). Asp369 acts as the 4-aspartylphosphate intermediate in catalysis. Positions 369 and 371 each coordinate Mg(2+). The ATP site is built by Thr371 and Glu483. Residues 499-525 form a disordered region; that stretch reads ALTGEKSTNQSNENDQSSLSQHNEKPG. Residues 503–519 show a composition bias toward polar residues; that stretch reads EKSTNQSNENDQSSLSQ. Residues Lys561, Arg606, Thr673, Gly674, Asp675, Arg732, and Lys738 each coordinate ATP. Asp757 lines the Mg(2+) pocket. Residue Asn760 participates in ATP binding. Residues 816-836 form a helical membrane-spanning segment; that stretch reads VLQLLAENVAQALYLIIGLVF. At 837 to 848 the chain is on the extracellular side; sequence RDENGKSVFPLS. Residues 849–869 form a helical membrane-spanning segment; sequence PVEVLWIIVVTSCFPAMGLGL. Over 870-885 the chain is Cytoplasmic; it reads EKAAPDLMDRPPHDSE. Residues 886–906 traverse the membrane as a helical segment; it reads VGIFTWEVIIDTFAYGIIMTG. The Extracellular segment spans residues 907–943; sequence SCMASFTGSLYGINSGRLGHDCDGTYNSSCRDVYRSR. Residues 944 to 964 traverse the membrane as a helical segment; the sequence is SAAFATMTWCALILAWEVVDM. Residues 965-991 are Cytoplasmic-facing; sequence RRSFFRMHPDTDSPVKEFFRSIWGNQF. A helical membrane pass occupies residues 992 to 1012; sequence LFWSIIFGFVSAFPVVYIPVI. Topologically, residues 1013-1021 are extracellular; the sequence is NDKVFLHKP. Residues 1022–1042 traverse the membrane as a helical segment; sequence IGAEWGLAIAFTIAFWIGAEL. The Cytoplasmic segment spans residues 1043–1091; sequence YKCGKRRYFKTQRAHNPENDLESNNKRDPFEAYSTSTTIHTEVNIGIKQ.

This sequence belongs to the cation transport ATPase (P-type) (TC 3.A.3) family. Type IID subfamily. It depends on Mg(2+) as a cofactor. The active site is phosphorylated in presence of sodium or potassium and in conditions of higher pH. Not phosphorylated in presence of calcium ions.

It localises to the cell membrane. The enzyme catalyses Na(+)(in) + ATP + H2O = Na(+)(out) + ADP + phosphate + H(+). The catalysed reaction is K(+)(in) + ATP + H2O = K(+)(out) + ADP + phosphate + H(+). In terms of biological role, catalyzes the hydrolysis of ATP coupled with the export of sodium and potassium from the cell. May export potassium less efficiently. May transport other cations such as lithium. Sodium/potassium efflux ATPases are involved in salt tolerance and maintaining the membrane potential across the plasma membrane in high salinity (Na+) or alkaline (K+) environments. Is negatively modulated by SIS2/HAL3. The chain is Sodium/potassium exporting P-type ATPase 1 from Saccharomyces cerevisiae (strain ATCC 204508 / S288c) (Baker's yeast).